A 150-amino-acid chain; its full sequence is Arginine repressor (150 aa).

The protein belongs to the ArgR family.

The protein localises to the cytoplasm. It functions in the pathway amino-acid biosynthesis; L-arginine biosynthesis [regulation]. Regulates arginine biosynthesis genes. The polypeptide is Arginine repressor (Staphylococcus aureus (strain Mu3 / ATCC 700698)).